Reading from the N-terminus, the 323-residue chain is UDP-glucuronate 4-epimerase (323 aa).

Gly-11–Ile-13 contributes to the NAD(+) binding site. The active-site Proton acceptor is Tyr-152. Lys-156 is an NAD(+) binding site.

Belongs to the NAD(P)-dependent epimerase/dehydratase family. The cofactor is NAD(+).

It carries out the reaction UDP-alpha-D-glucuronate = UDP-alpha-D-galacturonate. Its function is as follows. Catalyzes the interconversion of UDP-D-glucuronic acid (UDP-GlcA) and UDP-D-galacturonic acid (UDP-GalA). This chain is UDP-glucuronate 4-epimerase, found in Thermodesulfobacterium geofontis (strain OPF15).